A 151-amino-acid chain; its full sequence is Small ribosomal subunit protein uS13 (151 aa).

It belongs to the universal ribosomal protein uS13 family. Part of the 30S ribosomal subunit. Forms a loose heterodimer with protein S19. Forms two bridges to the 50S subunit in the 70S ribosome.

In terms of biological role, located at the top of the head of the 30S subunit, it contacts several helices of the 16S rRNA. In the 70S ribosome it contacts the 23S rRNA (bridge B1a) and protein L5 of the 50S subunit (bridge B1b), connecting the 2 subunits; these bridges are implicated in subunit movement. In Hyperthermus butylicus (strain DSM 5456 / JCM 9403 / PLM1-5), this protein is Small ribosomal subunit protein uS13.